A 332-amino-acid chain; its full sequence is UDP-3-O-acylglucosamine N-acyltransferase (332 aa).

The active-site Proton acceptor is the H231.

Belongs to the transferase hexapeptide repeat family. LpxD subfamily. Homotrimer.

The catalysed reaction is a UDP-3-O-[(3R)-3-hydroxyacyl]-alpha-D-glucosamine + a (3R)-hydroxyacyl-[ACP] = a UDP-2-N,3-O-bis[(3R)-3-hydroxyacyl]-alpha-D-glucosamine + holo-[ACP] + H(+). It participates in bacterial outer membrane biogenesis; LPS lipid A biosynthesis. In terms of biological role, catalyzes the N-acylation of UDP-3-O-acylglucosamine using 3-hydroxyacyl-ACP as the acyl donor. Is involved in the biosynthesis of lipid A, a phosphorylated glycolipid that anchors the lipopolysaccharide to the outer membrane of the cell. The chain is UDP-3-O-acylglucosamine N-acyltransferase from Vesicomyosocius okutanii subsp. Calyptogena okutanii (strain HA).